The sequence spans 160 residues: Cyclic pyranopterin monophosphate synthase (160 aa).

Substrate is bound by residues 77-79 (LCH) and 114-115 (ME). Asp129 is a catalytic residue.

The protein belongs to the MoaC family. As to quaternary structure, homohexamer; trimer of dimers.

It catalyses the reaction (8S)-3',8-cyclo-7,8-dihydroguanosine 5'-triphosphate = cyclic pyranopterin phosphate + diphosphate. It functions in the pathway cofactor biosynthesis; molybdopterin biosynthesis. In terms of biological role, catalyzes the conversion of (8S)-3',8-cyclo-7,8-dihydroguanosine 5'-triphosphate to cyclic pyranopterin monophosphate (cPMP). The polypeptide is Cyclic pyranopterin monophosphate synthase (Alcanivorax borkumensis (strain ATCC 700651 / DSM 11573 / NCIMB 13689 / SK2)).